A 204-amino-acid chain; its full sequence is UPF0056 membrane protein CT_852 (204 aa).

Transmembrane regions (helical) follow at residues 9–29 (TLLFYALFNALGSLPVFIALL), 39–59 (HIILRESIFALLLLLLFVTFG), 66–86 (LGIILPAFQFTGSLLLGSIAI), 107–127 (IFFPLAFPVITGPAMITSTLG), 138–158 (IVLGAIVLAWLFSLITLLLSS), and 176–196 (FGISLALMAGNLMLKALSTAF).

It belongs to the UPF0056 (MarC) family.

It localises to the cell membrane. In Chlamydia trachomatis serovar D (strain ATCC VR-885 / DSM 19411 / UW-3/Cx), this protein is UPF0056 membrane protein CT_852.